A 239-amino-acid chain; its full sequence is tRNA1(Val) (adenine(37)-N6)-methyltransferase (239 aa).

This sequence belongs to the methyltransferase superfamily. tRNA (adenine-N(6)-)-methyltransferase family.

It localises to the cytoplasm. The catalysed reaction is adenosine(37) in tRNA1(Val) + S-adenosyl-L-methionine = N(6)-methyladenosine(37) in tRNA1(Val) + S-adenosyl-L-homocysteine + H(+). Its function is as follows. Specifically methylates the adenine in position 37 of tRNA(1)(Val) (anticodon cmo5UAC). The chain is tRNA1(Val) (adenine(37)-N6)-methyltransferase from Vibrio vulnificus (strain CMCP6).